Reading from the N-terminus, the 182-residue chain is Large ribosomal subunit protein uL5 (182 aa).

This sequence belongs to the universal ribosomal protein uL5 family. In terms of assembly, part of the 50S ribosomal subunit; part of the 5S rRNA/L5/L18/L25 subcomplex. Contacts the 5S rRNA and the P site tRNA. Forms a bridge to the 30S subunit in the 70S ribosome.

Functionally, this is one of the proteins that bind and probably mediate the attachment of the 5S RNA into the large ribosomal subunit, where it forms part of the central protuberance. In the 70S ribosome it contacts protein S13 of the 30S subunit (bridge B1b), connecting the 2 subunits; this bridge is implicated in subunit movement. Contacts the P site tRNA; the 5S rRNA and some of its associated proteins might help stabilize positioning of ribosome-bound tRNAs. The protein is Large ribosomal subunit protein uL5 of Trichormus variabilis (strain ATCC 29413 / PCC 7937) (Anabaena variabilis).